Here is a 367-residue protein sequence, read N- to C-terminus: Peptide chain release factor 2 (367 aa).

Gln-254 carries the post-translational modification N5-methylglutamine.

The protein belongs to the prokaryotic/mitochondrial release factor family. Methylated by PrmC. Methylation increases the termination efficiency of RF2.

Its subcellular location is the cytoplasm. Peptide chain release factor 2 directs the termination of translation in response to the peptide chain termination codons UGA and UAA. This is Peptide chain release factor 2 from Leptospira borgpetersenii serovar Hardjo-bovis (strain JB197).